The chain runs to 57 residues: Ribosome modulation factor (57 aa).

Residues 1–28 (MKRQKRDRLERAQSQGYKAGLNGRSHDE) are disordered.

The protein belongs to the ribosome modulation factor family.

It is found in the cytoplasm. Its function is as follows. During stationary phase, converts 70S ribosomes to an inactive dimeric form (100S ribosomes). This is Ribosome modulation factor from Vibrio cholerae serotype O1 (strain MJ-1236).